Here is a 465-residue protein sequence, read N- to C-terminus: MAP kinase-interacting serine/threonine-protein kinase 1 (465 aa).

Over residues 1-11 (MVSSQKLEKPI) the composition is skewed to basic and acidic residues. The disordered stretch occupies residues 1 to 40 (MVSSQKLEKPIEMGSSEPLPIADGDRRRKKKRRGRATDSL). A Phosphoserine modification is found at Ser-39. The Protein kinase domain maps to 49-374 (KLTSELLGEG…AAQVLQHPWV (326 aa)). Residues 55-63 (LGEGAYAKV) and Lys-78 contribute to the ATP site. Residues 185 to 203 (APTSLGSSDPPTSASQVAG) are compositionally biased toward polar residues. Residues 185 to 204 (APTSLGSSDPPTSASQVAGT) form a disordered region. Asp-211 acts as the Proton acceptor in catalysis. A phosphoserine mark is found at Ser-221 and Ser-226. Residues Thr-250, Thr-255, and Thr-385 each carry the phosphothreonine modification. Residues 446 to 465 (RRRALAQAGRGEDRSPPTAL) are disordered. The segment covering 455–465 (RGEDRSPPTAL) has biased composition (basic and acidic residues). Position 460 is a phosphoserine (Ser-460).

The protein belongs to the protein kinase superfamily. CAMK Ser/Thr protein kinase family. Interacts with the C-terminal regions of EIF4G1 and EIF4G2. Also binds to dephosphorylated ERK1 and ERK2, and to the p38 kinases. Mg(2+) serves as cofactor. In terms of processing, dual phosphorylation of Thr-250 and Thr-255 activates the kinase. Phosphorylation of Thr-385 activates the kinase. MAPK3/ERK1 is one of the kinases which activate MKNK1/MNK1. Phosphorylation by PAK2 leads to a reduced phosphorylation of EIF4G1. Ubiquitous.

Its subcellular location is the cytoplasm. It localises to the nucleus. It catalyses the reaction L-seryl-[protein] + ATP = O-phospho-L-seryl-[protein] + ADP + H(+). The enzyme catalyses L-threonyl-[protein] + ATP = O-phospho-L-threonyl-[protein] + ADP + H(+). With respect to regulation, phosphorylated and activated by the p38 kinases and kinases in the Erk pathway. Functionally, may play a role in the response to environmental stress and cytokines. Appears to regulate translation by phosphorylating EIF4E, thus increasing the affinity of this protein for the 7-methylguanosine-containing mRNA cap. The sequence is that of MAP kinase-interacting serine/threonine-protein kinase 1 (MKNK1) from Homo sapiens (Human).